The sequence spans 275 residues: NH(3)-dependent NAD(+) synthetase (275 aa).

46–53 (GISGGQDS) serves as a coordination point for ATP. Asp52 contributes to the Mg(2+) binding site. A deamido-NAD(+)-binding site is contributed by Arg140. ATP is bound at residue Thr160. Glu165 is a Mg(2+) binding site. 2 residues coordinate deamido-NAD(+): Lys173 and Asp180. ATP contacts are provided by Lys189 and Thr211. Residue 260 to 261 (HK) participates in deamido-NAD(+) binding.

Belongs to the NAD synthetase family. Homodimer.

The catalysed reaction is deamido-NAD(+) + NH4(+) + ATP = AMP + diphosphate + NAD(+) + H(+). Its pathway is cofactor biosynthesis; NAD(+) biosynthesis; NAD(+) from deamido-NAD(+) (ammonia route): step 1/1. Catalyzes the ATP-dependent amidation of deamido-NAD to form NAD. Uses ammonia as a nitrogen source. The chain is NH(3)-dependent NAD(+) synthetase from Escherichia coli O17:K52:H18 (strain UMN026 / ExPEC).